Consider the following 60-residue polypeptide: Cytotoxin 7 (60 aa).

Intrachain disulfides connect C3–C21, C14–C38, C42–C53, and C54–C59.

This sequence belongs to the three-finger toxin family. Short-chain subfamily. Type IA cytotoxin sub-subfamily. In terms of assembly, monomer in solution; Homodimer and oligomer in the presence of negatively charged lipids forming a pore with a size ranging between 20 and 30 Angstroms. As to expression, expressed by the venom gland.

The protein localises to the secreted. Its subcellular location is the target cell membrane. In terms of biological role, shows cytolytic activity on many different cells by forming pore in lipid membranes. In vivo, increases heart rate or kills the animal by cardiac arrest. In addition, it binds to heparin with high affinity, interacts with Kv channel-interacting protein 1 (KCNIP1) in a calcium-independent manner, and binds to integrin alpha-V/beta-3 (ITGAV/ITGB3) with moderate affinity. This Naja annulifera (Banded Egyptian cobra) protein is Cytotoxin 7.